Reading from the N-terminus, the 328-residue chain is Malate dehydrogenase (328 aa).

11 to 17 (GAAGQIG) is a binding site for NAD(+). 2 residues coordinate substrate: R94 and R100. Residues N107, Q114, and 131 to 133 (VGN) each bind NAD(+). Positions 133 and 164 each coordinate substrate. H189 acts as the Proton acceptor in catalysis.

This sequence belongs to the LDH/MDH superfamily. MDH type 2 family.

The catalysed reaction is (S)-malate + NAD(+) = oxaloacetate + NADH + H(+). In terms of biological role, catalyzes the reversible oxidation of malate to oxaloacetate. The sequence is that of Malate dehydrogenase from Acinetobacter baumannii (strain SDF).